Consider the following 213-residue polypeptide: Large ribosomal subunit protein bL25 (213 aa).

Belongs to the bacterial ribosomal protein bL25 family. CTC subfamily. Part of the 50S ribosomal subunit; part of the 5S rRNA/L5/L18/L25 subcomplex. Contacts the 5S rRNA. Binds to the 5S rRNA independently of L5 and L18.

Functionally, this is one of the proteins that binds to the 5S RNA in the ribosome where it forms part of the central protuberance. The chain is Large ribosomal subunit protein bL25 from Mesorhizobium japonicum (strain LMG 29417 / CECT 9101 / MAFF 303099) (Mesorhizobium loti (strain MAFF 303099)).